The chain runs to 195 residues: CASP-like protein 1B1 (195 aa).

The Cytoplasmic segment spans residues 1-22; it reads MGLQNEEKLELGCTGLQPKPKK. A helical transmembrane segment spans residues 23–43; sequence WVLLMVRVVAFLATAAATLVM. The Extracellular segment spans residues 44–75; sequence ALNKETKTLVVATVGNTPIKVTLTAKFQHTPA. Residues 76–96 form a helical membrane-spanning segment; the sequence is FVFFVIANGMASFHNLLMIMV. The Cytoplasmic portion of the chain corresponds to 97 to 109; the sequence is ELCGQKLDYKGMR. A helical membrane pass occupies residues 110–130; that stretch reads LAMVAILDMMTVALVSGGASA. Residues 131–163 lie on the Extracellular side of the membrane; the sequence is ATFMAELGKNGNSHARWDKICDKFETFCDHGGA. Residues 164-184 traverse the membrane as a helical segment; that stretch reads ALIASSAGLILMMIISVMSIM. The Cytoplasmic portion of the chain corresponds to 185 to 195; the sequence is KLLIKPKSDSS.

This sequence belongs to the Casparian strip membrane proteins (CASP) family. In terms of assembly, homodimer and heterodimers.

It is found in the cell membrane. The protein is CASP-like protein 1B1 of Populus trichocarpa (Western balsam poplar).